A 275-amino-acid polypeptide reads, in one-letter code: tRNA pseudouridine synthase A (275 aa).

Catalysis depends on D55, which acts as the Nucleophile. Y111 serves as a coordination point for substrate.

The protein belongs to the tRNA pseudouridine synthase TruA family.

It catalyses the reaction uridine(38/39/40) in tRNA = pseudouridine(38/39/40) in tRNA. Its function is as follows. Formation of pseudouridine at positions 38, 39 and 40 in the anticodon stem and loop of transfer RNAs. In Methanococcoides burtonii (strain DSM 6242 / NBRC 107633 / OCM 468 / ACE-M), this protein is tRNA pseudouridine synthase A.